A 1364-amino-acid polypeptide reads, in one-letter code: Serine protease EatA (1364 aa).

A signal peptide spans 1–56 (MNKVFSLKYSFLAKGFIAVSELARRVSVKGKLKSASSIIISPITIAIVSYAPPSLA). Positions 57 to 307 (ATVNADISYQ…VVTTQDFLHQ (251 aa)) constitute a Peptidase S6 domain. Catalysis depends on charge relay system residues H134, D162, and S267. An Autotransporter domain is found at 1098–1364 (DSQGDAGGWA…SINANFRYYF (267 aa)).

Post-translationally, cleaved to release the mature protein from the outer membrane.

It is found in the periplasm. The protein resides in the secreted. It localises to the cell surface. The protein localises to the cell outer membrane. With respect to regulation, inhibited by phenylmethylsulfonyl fluoride. Autotransporter serine protease probably involved in virulence. The chain is Serine protease EatA (eatA) from Escherichia coli O78:H11 (strain H10407 / ETEC).